The chain runs to 445 residues: Methionine aminopeptidase 2 (445 aa).

The disordered stretch occupies residues 1-80 (MAAQVASGVG…TSKVQTEPPR (80 aa)). Positions 57-71 (AKKKKKKTKKKKKGT) are enriched in basic residues. His-195 is a binding site for substrate. Residues Asp-215, Asp-226, and His-295 each contribute to the a divalent metal cation site. His-303 lines the substrate pocket. Glu-331 and Glu-426 together coordinate a divalent metal cation.

Belongs to the peptidase M24A family. Methionine aminopeptidase eukaryotic type 2 subfamily. Co(2+) serves as cofactor. The cofactor is Zn(2+). Mn(2+) is required as a cofactor. It depends on Fe(2+) as a cofactor.

Its subcellular location is the cytoplasm. The enzyme catalyses Release of N-terminal amino acids, preferentially methionine, from peptides and arylamides.. In terms of biological role, cotranslationally removes the N-terminal methionine from nascent proteins. The N-terminal methionine is often cleaved when the second residue in the primary sequence is small and uncharged (Met-Ala-, Cys, Gly, Pro, Ser, Thr, or Val). The sequence is that of Methionine aminopeptidase 2 from Paracoccidioides brasiliensis (strain Pb03).